A 147-amino-acid polypeptide reads, in one-letter code: uncharacterized protein (147 aa).

The HTH LytTR-type domain maps to 44-147; that stretch reads LVGYIDKEIH…LKSIKERLSI (104 aa).

Its subcellular location is the cytoplasm. This is an uncharacterized protein from Staphylococcus aureus (strain MRSA252).